A 272-amino-acid chain; its full sequence is Indole-3-glycerol phosphate synthase (272 aa).

It belongs to the TrpC family.

The catalysed reaction is 1-(2-carboxyphenylamino)-1-deoxy-D-ribulose 5-phosphate + H(+) = (1S,2R)-1-C-(indol-3-yl)glycerol 3-phosphate + CO2 + H2O. It functions in the pathway amino-acid biosynthesis; L-tryptophan biosynthesis; L-tryptophan from chorismate: step 4/5. The polypeptide is Indole-3-glycerol phosphate synthase (Mycolicibacterium vanbaalenii (strain DSM 7251 / JCM 13017 / BCRC 16820 / KCTC 9966 / NRRL B-24157 / PYR-1) (Mycobacterium vanbaalenii)).